The primary structure comprises 299 residues: GTPase Era (299 aa).

Positions 9–177 (RSGSVAVIGR…VGDLLKLVPE (169 aa)) constitute an Era-type G domain. Positions 17–24 (GRPNVGKS) are G1. A GTP-binding site is contributed by 17–24 (GRPNVGKS). Positions 43-47 (QTTRH) are G2. The segment at 64-67 (DTPG) is G3. GTP-binding positions include 64 to 68 (DTPGL) and 126 to 129 (NKVD). A G4 region spans residues 126–129 (NKVD). Positions 156-158 (VSA) are G5. One can recognise a KH type-2 domain in the interval 200-284 (VREQLMRQLG…FLETWVRVRE (85 aa)).

Belongs to the TRAFAC class TrmE-Era-EngA-EngB-Septin-like GTPase superfamily. Era GTPase family. Monomer.

It localises to the cytoplasm. The protein resides in the cell inner membrane. Functionally, an essential GTPase that binds both GDP and GTP, with rapid nucleotide exchange. Plays a role in 16S rRNA processing and 30S ribosomal subunit biogenesis and possibly also in cell cycle regulation and energy metabolism. In Xanthomonas oryzae pv. oryzae (strain MAFF 311018), this protein is GTPase Era.